The primary structure comprises 292 residues: Ribosomal protein L11 methyltransferase (292 aa).

Residues Thr-144, Gly-165, Asp-187, and Asn-229 each coordinate S-adenosyl-L-methionine.

This sequence belongs to the methyltransferase superfamily. PrmA family.

The protein localises to the cytoplasm. It carries out the reaction L-lysyl-[protein] + 3 S-adenosyl-L-methionine = N(6),N(6),N(6)-trimethyl-L-lysyl-[protein] + 3 S-adenosyl-L-homocysteine + 3 H(+). Methylates ribosomal protein L11. The chain is Ribosomal protein L11 methyltransferase from Ectopseudomonas mendocina (strain ymp) (Pseudomonas mendocina).